The following is a 440-amino-acid chain: Chromosome partition protein MukF (440 aa).

Residues Leu208–Ile236 form a leucine-zipper region.

It belongs to the MukF family. As to quaternary structure, interacts, and probably forms a ternary complex, with MukE and MukB via its C-terminal region. The complex formation is stimulated by calcium or magnesium. It is required for an interaction between MukE and MukB.

The protein localises to the cytoplasm. Its subcellular location is the nucleoid. Involved in chromosome condensation, segregation and cell cycle progression. May participate in facilitating chromosome segregation by condensation DNA from both sides of a centrally located replisome during cell division. Not required for mini-F plasmid partitioning. Probably acts via its interaction with MukB and MukE. Overexpression results in anucleate cells. It has a calcium binding activity. The polypeptide is Chromosome partition protein MukF (Edwardsiella ictaluri (strain 93-146)).